Consider the following 526-residue polypeptide: MVNEGPNQEESDDTPVPESALQADPSVSVHPSVSVHPSVSINPSVSVHPSSSAHPSALAQPSGLAHPSSSGPEDLSVIKVSRRRWAVVLVFSCYSMCNSFQWIQYGSINNIFMHFYGVSAFAIDWLSMCYMLTYIPLLLPVAWLLEKFGLRTIALTGSALNCLGAWVKLGSLKPHLFPVTVVGQLICSVAQVFILGMPSRIASVWFGANEVSTACSVAVFGNQLGIAIGFLVPPVLVPNIEDRDELAYHISIMFYIIGGVATLLLILVIIVFKEKPKYPPSRAQSLSYALTSPDASYLGSIARLFKNLNFVLLVITYGLNAGAFYALSTLLNRMVIWHYPGEEVNAGRIGLTIVIAGMLGAVISGIWLDRSKTYKETTLVVYIMTLVGMVVYTFTLNLGHLWVVFITAGTMGFFMTGYLPLGFEFAVELTYPESEGISSGLLNISAQVFGIIFTISQGQIIDNYGTKPGNIFLCVFLTLGAALTAFIKADLRRQKANKETLENKLQEEEEESNTSKVPTAVSEDHL.

Positions 1 to 70 (MVNEGPNQEE…PSGLAHPSSS (70 aa)) are disordered. Over 1-76 (MVNEGPNQEE…PSSSGPEDLS (76 aa)) the chain is Cytoplasmic. Heme b is bound at residue 1–84 (MVNEGPNQEE…LSVIKVSRRR (84 aa)). 5 repeat units span residues 25-30 (PSVSVH), 31-36 (PSVSVH), 37-42 (PSVSIN), 43-48 (PSVSVH), and 49-54 (PSSSAH). The span at 25-56 (PSVSVHPSVSVHPSVSINPSVSVHPSSSAHPS) shows a compositional bias: low complexity. Residues 25 to 72 (PSVSVHPSVSVHPSVSINPSVSVHPSSSAHPSALAQPSGLAHPSSSGP) form an 8 X 6 AA tandem repeats of P-S-[VS]-S-[VIAG]-[HNP] region. One copy of the 6; approximate repeat lies at 55-60 (PSALAQ). One copy of the 7; approximate repeat lies at 61-66 (PSGLAH). Residues 67 to 72 (PSSSGP) form repeat 8. Residues 77–101 (VIKVSRRRWAVVLVFSCYSMCNSFQ) form a helical membrane-spanning segment. Positions 98 and 102 each coordinate choline. At 102-119 (WIQYGSINNIFMHFYGVS) the chain is on the extracellular side. The chain crosses the membrane as a helical span at residues 120–147 (AFAIDWLSMCYMLTYIPLLLPVAWLLEK). Over 148–149 (FG) the chain is Cytoplasmic. A helical membrane pass occupies residues 150 to 169 (LRTIALTGSALNCLGAWVKL). Residues 170–176 (GSLKPHL) lie on the Extracellular side of the membrane. Residues 177-205 (FPVTVVGQLICSVAQVFILGMPSRIASVW) form a helical membrane-spanning segment. Gln-191 and Leu-195 together coordinate choline. The Cytoplasmic segment spans residues 206–210 (FGANE). The helical transmembrane segment at 211-236 (VSTACSVAVFGNQLGIAIGFLVPPVL) threads the bilayer. Over 237-241 (VPNIE) the chain is Extracellular. Residues 242–271 (DRDELAYHISIMFYIIGGVATLLLILVIIV) form a helical membrane-spanning segment. Topologically, residues 272 to 307 (FKEKPKYPPSRAQSLSYALTSPDASYLGSIARLFKN) are cytoplasmic. The helical transmembrane segment at 308–338 (LNFVLLVITYGLNAGAFYALSTLLNRMVIWH) threads the bilayer. Tyr-325 serves as a coordination point for choline. The Extracellular portion of the chain corresponds to 339 to 342 (YPGE). Residues 343-371 (EVNAGRIGLTIVIAGMLGAVISGIWLDRS) form a helical membrane-spanning segment. Residues 372-373 (KT) are Cytoplasmic-facing. The chain crosses the membrane as a helical span at residues 374–396 (YKETTLVVYIMTLVGMVVYTFTL). Residues 397-399 (NLG) lie on the Extracellular side of the membrane. Residues 400–429 (HLWVVFITAGTMGFFMTGYLPLGFEFAVEL) form a helical membrane-spanning segment. Residues 430 to 437 (TYPESEGI) lie on the Cytoplasmic side of the membrane. The chain crosses the membrane as a helical span at residues 438–463 (SSGLLNISAQVFGIIFTISQGQIIDN). Gln-447 is a choline binding site. The Extracellular segment spans residues 464-465 (YG). A helical transmembrane segment spans residues 466 to 488 (TKPGNIFLCVFLTLGAALTAFIK). The Cytoplasmic portion of the chain corresponds to 489–526 (ADLRRQKANKETLENKLQEEEEESNTSKVPTAVSEDHL). The segment at 500 to 526 (TLENKLQEEEEESNTSKVPTAVSEDHL) is disordered. Residue Ser-515 is modified to Phosphoserine.

This sequence belongs to the major facilitator superfamily. Feline leukemia virus subgroup C receptor (TC 2.A.1.28.1) family. In terms of assembly, interacts with components of electron transfer chain complexes III, IV and V including CYC1, NDUFA4, COX4I1, ATP5PD and ATP5F1C; these interactions occur in the absence of heme and are disrupted upon heme binding. Interacts with ATP2A2; this interaction occurs in the absence of heme and promotes ATP2A2 proteasomal degradation; the complex is dissociated upon heme binding. Interacts with HMOX1; this interaction is potentiated in the presence of heme. Expressed in non-hematopoietic tissues, with relative abundant expression in brain, placenta, lung, liver and kidney. Also expressed in hematopoietic tissues (fetal liver, spleen, lymph node, thymus, leukocytes and bone marrow). Found in acidophil cells of the pituitary that secrete growth hormone and prolactin (at protein level).

It localises to the cell membrane. The protein localises to the mitochondrion membrane. It is found in the endoplasmic reticulum membrane. The catalysed reaction is choline(out) = choline(in). It catalyses the reaction ethanolamine(in) = ethanolamine(out). The enzyme catalyses heme b(in) = heme b(out). Choline uniporter that specifically mediates choline uptake at the blood-brain-barrier. Responsible for the majority of choline uptake across the blood-brain-barrier from the circulation into the brain. Choline, a nutrient critical for brain development, is a precursor of phosphatidylcholine, as well as betaine. Also mediates transport of ethanolamine. Choline and ethanolamine transport is not coupled with proton transport and is exclusively driven by the choline gradient across the plasma membrane. However, the presence of an inwardly directed proton gradient enhances choline uptake. Also acts as a heme b transporter. Required to regulate mitochondrial respiration processes, ATP synthesis and thermogenesis. At low heme levels, interacts with components of electron transfer chain (ETC) complexes and ATP2A2, leading to ubiquitin-mediated degradation of ATP2A2 and inhibition of thermogenesis. Upon heme binding, dissociates from ETC complexes to allow switching from mitochondrial ATP synthesis to thermogenesis. The sequence is that of Choline/ethanolamine transporter FLVCR2 from Homo sapiens (Human).